The following is a 192-amino-acid chain: uncharacterized protein (192 aa).

2 disordered regions span residues methionine 1–proline 37 and alanine 146–lysine 192. 2 stretches are compositionally biased toward pro residues: residues threonine 8–valine 19 and alanine 159–proline 180.

This is an uncharacterized protein from Homo sapiens (Human).